Here is a 458-residue protein sequence, read N- to C-terminus: Sensor histidine kinase ZraS (458 aa).

The Cytoplasmic portion of the chain corresponds to 1-14; it reads MRFMQRSKDSLAKW. The chain crosses the membrane as a helical span at residues 15–35; it reads LSAILPVVIVGLVGLFAVTVI. The Periplasmic portion of the chain corresponds to 36-194; the sequence is RDYGRETAAA…SAEDREQRNT (159 aa). Residues 195–215 form a helical membrane-spanning segment; that stretch reads LIILFALATVLLASVLSFFWY. The Cytoplasmic portion of the chain corresponds to 216–458; the sequence is RRYLRSRQLL…VNITRKDPQG (243 aa). Positions 244–451 constitute a Histidine kinase domain; the sequence is GVAHEIRNPL…RFTLWLPVNI (208 aa). His-247 is modified (phosphohistidine; by autocatalysis).

Autophosphorylated.

The protein localises to the cell inner membrane. It catalyses the reaction ATP + protein L-histidine = ADP + protein N-phospho-L-histidine.. Activity of the ZraS/ZraR two-component system is repressed by the zinc-bound form of ZraP, which probably interacts with the periplasmic region of ZraS. Part of the Zra signaling pathway, an envelope stress response (ESR) system composed of the periplasmic accessory protein ZraP, the histidine kinase ZraS and the transcriptional regulator ZraR. The ZraPSR system contributes to antibiotic resistance and is important for membrane integrity in the presence of membrane-targeting biocides. ZraS is a member of the two-component regulatory system ZraS/ZraR. Functions as a membrane-associated sensor kinase that phosphorylates ZraR in response to high concentrations of Zn(2+) or Pb(2+) in the medium. This is Sensor histidine kinase ZraS (zraS) from Escherichia coli O157:H7.